A 174-amino-acid chain; its full sequence is Inactive signal peptidase IA (174 aa).

Residues 1–7 (MKKVVKY) are Cytoplasmic-facing. Residues 8–28 (LISLILAIIIVLFVQTFVIVG) form a helical membrane-spanning segment. Residues 29 to 174 (HVIPNNDMSP…FSKWTVQFKS (146 aa)) lie on the Extracellular side of the membrane.

It belongs to the peptidase S26 family.

It is found in the cell membrane. Its function is as follows. Catalytically inactive. The protein is Inactive signal peptidase IA (spsA) of Staphylococcus aureus (strain COL).